The sequence spans 192 residues: Large ribosomal subunit protein uL5 (192 aa).

This sequence belongs to the universal ribosomal protein uL5 family. Part of the 50S ribosomal subunit; part of the 5S rRNA/L5/L18/L25 subcomplex. Contacts the 5S rRNA and the P site tRNA. Forms a bridge to the 30S subunit in the 70S ribosome.

This is one of the proteins that bind and probably mediate the attachment of the 5S RNA into the large ribosomal subunit, where it forms part of the central protuberance. In the 70S ribosome it contacts protein S13 of the 30S subunit (bridge B1b), connecting the 2 subunits; this bridge is implicated in subunit movement. Contacts the P site tRNA; the 5S rRNA and some of its associated proteins might help stabilize positioning of ribosome-bound tRNAs. This is Large ribosomal subunit protein uL5 from Zymomonas mobilis subsp. mobilis (strain ATCC 31821 / ZM4 / CP4).